The chain runs to 382 residues: RNA binding protein fox-1 homolog 1 (382 aa).

Positions 1-121 (MNCEREQLRG…NKSQPKRLHV (121 aa)) are disordered. Residues 70 to 87 (QTHSEQSPADTSAQTVSG) show a composition bias toward polar residues. Low complexity predominate over residues 88 to 99 (TATQTDDAAPTD). Positions 100–113 (GQPQTQPSENTENK) are enriched in polar residues. An RRM domain is found at 117–193 (KRLHVSNIPF…RKIEVNNATA (77 aa)). Arginine 317 carries the post-translational modification Asymmetric dimethylarginine. A disordered region spans residues 357–382 (MPQGSSPSTDFRGAKLHTSRPLLSGS).

As to quaternary structure, binds to the C-terminus of ATXN2.

It is found in the nucleus. The protein resides in the cytoplasm. Functionally, RNA-binding protein that regulates alternative splicing events by binding to 5'-UGCAUGU-3' elements. Prevents binding of U2AF2 to the 3'-splice site. Regulates alternative splicing of tissue-specific exons and of differentially spliced exons during erythropoiesis. The sequence is that of RNA binding protein fox-1 homolog 1 (RBFOX1) from Pongo abelii (Sumatran orangutan).